Consider the following 160-residue polypeptide: SsrA-binding protein (160 aa).

The protein belongs to the SmpB family.

It localises to the cytoplasm. Required for rescue of stalled ribosomes mediated by trans-translation. Binds to transfer-messenger RNA (tmRNA), required for stable association of tmRNA with ribosomes. tmRNA and SmpB together mimic tRNA shape, replacing the anticodon stem-loop with SmpB. tmRNA is encoded by the ssrA gene; the 2 termini fold to resemble tRNA(Ala) and it encodes a 'tag peptide', a short internal open reading frame. During trans-translation Ala-aminoacylated tmRNA acts like a tRNA, entering the A-site of stalled ribosomes, displacing the stalled mRNA. The ribosome then switches to translate the ORF on the tmRNA; the nascent peptide is terminated with the 'tag peptide' encoded by the tmRNA and targeted for degradation. The ribosome is freed to recommence translation, which seems to be the essential function of trans-translation. The protein is SsrA-binding protein of Yersinia enterocolitica serotype O:8 / biotype 1B (strain NCTC 13174 / 8081).